A 107-amino-acid chain; its full sequence is Cell cycle protein GpsB (107 aa).

Residues Leu-32–Ser-65 adopt a coiled-coil conformation. The interval Lys-57–Val-80 is disordered. Over residues Asn-58–Thr-68 the composition is skewed to polar residues.

It belongs to the GpsB family. As to quaternary structure, forms polymers through the coiled coil domains. Interacts with PBP1, MreC and EzrA.

It localises to the cytoplasm. Functionally, divisome component that associates with the complex late in its assembly, after the Z-ring is formed, and is dependent on DivIC and PBP2B for its recruitment to the divisome. Together with EzrA, is a key component of the system that regulates PBP1 localization during cell cycle progression. Its main role could be the removal of PBP1 from the cell pole after pole maturation is completed. Also contributes to the recruitment of PBP1 to the division complex. Not essential for septum formation. The sequence is that of Cell cycle protein GpsB from Streptococcus uberis (strain ATCC BAA-854 / 0140J).